Reading from the N-terminus, the 513-residue chain is GMP synthase [glutamine-hydrolyzing] (513 aa).

Residues 5 to 195 (LVLVIDFGGQ…VYNICGCTGD (191 aa)) enclose the Glutamine amidotransferase type-1 domain. C82 (nucleophile) is an active-site residue. Catalysis depends on residues H169 and E171. The 193-residue stretch at 196 to 388 (WKMDSFVEKT…LGIPEKLVFR (193 aa)) folds into the GMPS ATP-PPase domain. An ATP-binding site is contributed by 223-229 (SGGVDSS).

As to quaternary structure, homodimer.

The catalysed reaction is XMP + L-glutamine + ATP + H2O = GMP + L-glutamate + AMP + diphosphate + 2 H(+). Its pathway is purine metabolism; GMP biosynthesis; GMP from XMP (L-Gln route): step 1/1. Its function is as follows. Catalyzes the synthesis of GMP from XMP. In Clostridium botulinum (strain Eklund 17B / Type B), this protein is GMP synthase [glutamine-hydrolyzing].